The following is a 172-amino-acid chain: R-phycocyanin-1 beta chain (172 aa).

An N4-methylasparagine modification is found at Asn-72. Residue Cys-82 coordinates (2R,3E)-phycocyanobilin. Cys-153 provides a ligand contact to (2R,3E)-phycoerythrobilin.

The protein belongs to the phycobiliprotein family. Heterodimer of an alpha and a beta chain. Dimers further assemble into trimers and the trimers into hexamers. The basic functional unit of phycobiliproteins is a ring-shaped hexamer formed from two back-to-back trimers contacting via the alpha chain subunits. The trimers are composed of alpha/beta subunit heterodimers arranged around a three-fold axis of symmetry. The phycoerythrins also contain a gamma subunit which is located in the center of the hexamer. In terms of processing, contains two covalently linked bilin chromophores.

Its subcellular location is the plastid. It is found in the chloroplast thylakoid membrane. Its function is as follows. Light-harvesting photosynthetic bile pigment-protein from the phycobiliprotein complex (phycobilisome, PBS). Phycocyanin is the major phycobiliprotein in the PBS rod. This Porphyridium purpureum (Red alga) protein is R-phycocyanin-1 beta chain (rpcB).